The chain runs to 459 residues: Methylenetetrahydrofolate--tRNA-(uracil-5-)-methyltransferase TrmFO (459 aa).

26-31 (GGGLAG) contributes to the FAD binding site.

The protein belongs to the MnmG family. TrmFO subfamily. Requires FAD as cofactor.

The protein resides in the cytoplasm. It carries out the reaction uridine(54) in tRNA + (6R)-5,10-methylene-5,6,7,8-tetrahydrofolate + NADH + H(+) = 5-methyluridine(54) in tRNA + (6S)-5,6,7,8-tetrahydrofolate + NAD(+). The catalysed reaction is uridine(54) in tRNA + (6R)-5,10-methylene-5,6,7,8-tetrahydrofolate + NADPH + H(+) = 5-methyluridine(54) in tRNA + (6S)-5,6,7,8-tetrahydrofolate + NADP(+). In terms of biological role, catalyzes the folate-dependent formation of 5-methyl-uridine at position 54 (M-5-U54) in all tRNAs. The protein is Methylenetetrahydrofolate--tRNA-(uracil-5-)-methyltransferase TrmFO of Synechococcus sp. (strain JA-2-3B'a(2-13)) (Cyanobacteria bacterium Yellowstone B-Prime).